A 676-amino-acid chain; its full sequence is Methionine--tRNA ligase (676 aa).

The short motif at 15-25 (PYANGPIHLGH) is the 'HIGH' region element. Positions 146, 149, 159, and 162 each coordinate Zn(2+). The 'KMSKS' region signature appears at 332–336 (KMSKS). Lys-335 lines the ATP pocket. In terms of domain architecture, tRNA-binding spans 575 to 676 (DFAKIDLRIA…EGAQPGMRVK (102 aa)).

Belongs to the class-I aminoacyl-tRNA synthetase family. MetG type 1 subfamily. Homodimer. The cofactor is Zn(2+).

It localises to the cytoplasm. It catalyses the reaction tRNA(Met) + L-methionine + ATP = L-methionyl-tRNA(Met) + AMP + diphosphate. Its function is as follows. Is required not only for elongation of protein synthesis but also for the initiation of all mRNA translation through initiator tRNA(fMet) aminoacylation. The protein is Methionine--tRNA ligase of Shewanella sp. (strain MR-7).